The chain runs to 150 residues: Small ribosomal subunit protein eS19 (150 aa).

Belongs to the eukaryotic ribosomal protein eS19 family. In terms of assembly, part of the 30S ribosomal subunit.

In terms of biological role, may be involved in maturation of the 30S ribosomal subunit. The chain is Small ribosomal subunit protein eS19 from Thermoplasma acidophilum (strain ATCC 25905 / DSM 1728 / JCM 9062 / NBRC 15155 / AMRC-C165).